Here is a 387-residue protein sequence, read N- to C-terminus: Beta-citrylglutamate synthase B (387 aa).

Positions 119–304 constitute an ATP-grasp domain; that stretch reads FQELAGHGVP…VAGIIADYAA (186 aa). ATP contacts are provided by residues K158, 193-203, and R219; that span reads QKYIKESHGRD. Residues D264, E277, and N279 each contribute to the Mg(2+) site. Mn(2+) contacts are provided by D264, E277, and N279. Residues 325–361 are disordered; the sequence is ASETSEPELGPPASAAVDNMSASSSSVDSDPESTTER. A compositionally biased stretch (low complexity) spans 337-352; that stretch reads ASAAVDNMSASSSSVD.

Belongs to the RimK family. The cofactor is Mg(2+). It depends on Mn(2+) as a cofactor. In terms of tissue distribution, strongly expressed in brain and testis. Expressed in eyes, thymus, lung, kidney, skeletal muscle, spleen, skin and heart. Expressed in neurons of the neocortex, the gray matter and Purkinje cells.

It is found in the cytoplasm. It carries out the reaction citrate + L-glutamate + ATP = beta-citrylglutamate + ADP + phosphate + H(+). The catalysed reaction is N-acetyl-L-aspartate + L-glutamate + ATP = N-acetyl-L-aspartyl-L-glutamate + ADP + phosphate + H(+). Functionally, catalyzes the synthesis of beta-citryl-L-glutamate and N-acetyl-L-aspartyl-L-glutamate. Beta-citryl-L-glutamate is synthesized more efficiently than N-acetyl-L-aspartyl-L-glutamate. This chain is Beta-citrylglutamate synthase B (Rimklb), found in Mus musculus (Mouse).